Consider the following 545-residue polypeptide: Chaperonin GroEL (545 aa).

ATP contacts are provided by residues 29 to 32, Lys50, 86 to 90, Gly414, 477 to 479, and Asp493; these read TMGP, DGTTT, and NAA.

The protein belongs to the chaperonin (HSP60) family. As to quaternary structure, forms a cylinder of 14 subunits composed of two heptameric rings stacked back-to-back. Interacts with the co-chaperonin GroES.

It is found in the cytoplasm. The enzyme catalyses ATP + H2O + a folded polypeptide = ADP + phosphate + an unfolded polypeptide.. Together with its co-chaperonin GroES, plays an essential role in assisting protein folding. The GroEL-GroES system forms a nano-cage that allows encapsulation of the non-native substrate proteins and provides a physical environment optimized to promote and accelerate protein folding. In Campylobacter fetus subsp. fetus (strain 82-40), this protein is Chaperonin GroEL.